Here is a 258-residue protein sequence, read N- to C-terminus: MVSQEAVVFLALSGAIAFLLPIGLIVWFKRKYGASLKVFFIGALTFFVFAQLLEGGVHVYVLQVNEMTKEAMQHPLWYGIYGCLMAGIFEECGRYLMMRFFMKRHHTWADGLAFGAGHGGLEAILITGLSSISLIVYAFAINSGTFEQLLVNGDVKQALLPIQEQLLHTPSYEWMLGGIERISAIAVQIGLSLLVLYAVKNRRPLFLLYSILLHALFNVPAVLYQRGIIEHAAAVEIIVALIAALSVYWIVKAKRVFQ.

The next 7 helical transmembrane spans lie at 8 to 28 (VFLA…IVWF), 38 to 58 (VFFI…GGVH), 70 to 90 (EAMQ…GIFE), 121 to 141 (LEAI…AFAI), 176 to 196 (LGGI…LLVL), 204 to 224 (PLFL…AVLY), and 231 to 251 (HAAA…YWIV).

It localises to the cell membrane. This is an uncharacterized protein from Bacillus subtilis (strain 168).